Consider the following 151-residue polypeptide: Probable ribonuclease P/MRP protein subunit POP5 (151 aa).

This sequence belongs to the eukaryotic/archaeal RNase P protein component 2 family. In terms of assembly, component of nuclear RNase P and RNase MRP ribonucleoproteins. Interacts with GAF1/RPP30.

The protein resides in the nucleus. The protein localises to the nucleolus. Functionally, essential protein required during embryogenesis. Component of ribonuclease P, a protein complex that generates mature tRNA molecules by cleaving their 5'-ends. Also a component of RNase MRP. The polypeptide is Probable ribonuclease P/MRP protein subunit POP5 (EMB1687) (Arabidopsis thaliana (Mouse-ear cress)).